The chain runs to 110 residues: Ribonuclease P protein component 1 (110 aa).

Belongs to the eukaryotic/archaeal RNase P protein component 1 family. As to quaternary structure, consists of a catalytic RNA component and at least 4-5 protein subunits.

The protein resides in the cytoplasm. The catalysed reaction is Endonucleolytic cleavage of RNA, removing 5'-extranucleotides from tRNA precursor.. Functionally, part of ribonuclease P, a protein complex that generates mature tRNA molecules by cleaving their 5'-ends. The sequence is that of Ribonuclease P protein component 1 from Aeropyrum pernix (strain ATCC 700893 / DSM 11879 / JCM 9820 / NBRC 100138 / K1).